We begin with the raw amino-acid sequence, 314 residues long: 2-dehydro-3-deoxygluconokinase (314 aa).

Residues 28-32 (GDTLN), Y88, 102-104 (YWR), and R170 each bind substrate. ATP is bound by residues 168–170 (NYR), 228–233 (KCGKNG), and 260–263 (SAGD). D263 is a substrate binding site. The Proton acceptor role is filled by D263.

This sequence belongs to the carbohydrate kinase PfkB family.

The catalysed reaction is 2-dehydro-3-deoxy-D-gluconate + ATP = 2-dehydro-3-deoxy-6-phospho-D-gluconate + ADP + H(+). It functions in the pathway carbohydrate acid metabolism; 2-dehydro-3-deoxy-D-gluconate degradation; D-glyceraldehyde 3-phosphate and pyruvate from 2-dehydro-3-deoxy-D-gluconate: step 1/2. Functionally, catalyzes the phosphorylation of 2-keto-3-deoxygluconate (KDG) to produce 2-keto-3-deoxy-6-phosphogluconate (KDPG). This chain is 2-dehydro-3-deoxygluconokinase (kdgK), found in Haemophilus influenzae (strain ATCC 51907 / DSM 11121 / KW20 / Rd).